We begin with the raw amino-acid sequence, 491 residues long: MNTQQLAKLRSIVPEMRRVRHIHFVGIGGAGMGGIAEVLANEGYQISGSDLAPNPVTQQLLNLGATIYFNHRPENVRDASVVVVSSAISADNPEIVAAHEARIPVIRRAEMLAELMRFRHGIAIAGTHGKTTTTAMVSSIYAEAGLDPTFVNGGLVKAAGVHARLGHGRYLIAEADESDASFLHLQPMVAIVTNIEADHMDTYQGDFENLKQTFINFLHNLPFYGRAVMCVDDPVIRELLPRVGRQTTTYGFSEDADVRVEDYQQIGPQGHFTLLRQDKEPMRVTLNAPGRHNALNAAAAVAVATEEGIDDEAILRALESFQGTGRRFDFLGEFPLEPVNGKSGTAMLVDDYGHHPTEVDATIKAARAGWPDKNLVMLFQPHRFTRTRDLYDDFANVLTQVDTLLMLEVYPAGEAPIPGADSRSLCRTIRGRGKIDPILVPDPAQVAEMLAPVLTGNDLILVQGAGNIGKIARSLAEIKLKPQTPEEEQHD.

126–132 (GTHGKTT) is a binding site for ATP.

Belongs to the MurCDEF family.

It localises to the cytoplasm. The catalysed reaction is UDP-N-acetyl-alpha-D-muramate + L-alanine + ATP = UDP-N-acetyl-alpha-D-muramoyl-L-alanine + ADP + phosphate + H(+). Its pathway is cell wall biogenesis; peptidoglycan biosynthesis. Cell wall formation. The protein is UDP-N-acetylmuramate--L-alanine ligase of Shigella flexneri serotype 5b (strain 8401).